A 106-amino-acid polypeptide reads, in one-letter code: Toxin-like structure LSTX-D3 (106 aa).

Positions 1–20 are cleaved as a signal peptide; the sequence is MMKVLVVVALLVTLISYSSS. Positions 21-41 are excised as a propeptide; sequence EGIDDLEADELLSLMANEQTR. Cystine bridges form between Cys-45/Cys-60, Cys-52/Cys-69, Cys-59/Cys-85, and Cys-71/Cys-83.

Belongs to the neurotoxin 19 (CSTX) family. 02 (D7) subfamily. As to expression, expressed by the venom gland.

The protein resides in the secreted. This is Toxin-like structure LSTX-D3 from Lycosa singoriensis (Wolf spider).